Here is a 186-residue protein sequence, read N- to C-terminus: Ribosome maturation factor RimM (186 aa).

Residues 103–174 (PEEYHYSDLI…ELQVQPPPGL (72 aa)) enclose the PRC barrel domain.

Belongs to the RimM family. As to quaternary structure, binds ribosomal protein uS19.

The protein resides in the cytoplasm. An accessory protein needed during the final step in the assembly of 30S ribosomal subunit, possibly for assembly of the head region. Essential for efficient processing of 16S rRNA. May be needed both before and after RbfA during the maturation of 16S rRNA. It has affinity for free ribosomal 30S subunits but not for 70S ribosomes. This Synechococcus sp. (strain JA-3-3Ab) (Cyanobacteria bacterium Yellowstone A-Prime) protein is Ribosome maturation factor RimM.